A 75-amino-acid chain; its full sequence is Gas vesicle protein S (75 aa).

It belongs to the gas vesicle GvpA family.

The protein localises to the gas vesicle. In terms of biological role, probably a minor component of the gas vesicle. Gas vesicles are hollow, gas filled proteinaceous nanostructures found in some microorganisms. It is not clear what function gas vesicles perform in soil bacteria. The polypeptide is Gas vesicle protein S (Streptomyces sp. (strain CB03234)).